A 101-amino-acid chain; its full sequence is Urease subunit beta (101 aa).

Belongs to the urease beta subunit family. As to quaternary structure, heterotrimer of UreA (gamma), UreB (beta) and UreC (alpha) subunits. Three heterotrimers associate to form the active enzyme.

Its subcellular location is the cytoplasm. It carries out the reaction urea + 2 H2O + H(+) = hydrogencarbonate + 2 NH4(+). The protein operates within nitrogen metabolism; urea degradation; CO(2) and NH(3) from urea (urease route): step 1/1. The protein is Urease subunit beta of Allorhizobium ampelinum (strain ATCC BAA-846 / DSM 112012 / S4) (Agrobacterium vitis (strain S4)).